The chain runs to 414 residues: S-adenosylmethionine synthase (414 aa).

Residue H11 coordinates ATP. D13 is a binding site for Mg(2+). E39 contributes to the K(+) binding site. L-methionine is bound by residues E52 and Q95. Residues 95–105 (QSPDIAQGVNM) form a flexible loop region. Residues 169 to 171 (DGK), 245 to 246 (KF), D254, 260 to 261 (RK), A277, and K281 contribute to the ATP site. D254 is a binding site for L-methionine. L-methionine is bound at residue K285.

The protein belongs to the AdoMet synthase family. In terms of assembly, homotetramer; dimer of dimers. Requires Mg(2+) as cofactor. The cofactor is K(+).

The protein localises to the cytoplasm. It carries out the reaction L-methionine + ATP + H2O = S-adenosyl-L-methionine + phosphate + diphosphate. Its pathway is amino-acid biosynthesis; S-adenosyl-L-methionine biosynthesis; S-adenosyl-L-methionine from L-methionine: step 1/1. Functionally, catalyzes the formation of S-adenosylmethionine (AdoMet) from methionine and ATP. The overall synthetic reaction is composed of two sequential steps, AdoMet formation and the subsequent tripolyphosphate hydrolysis which occurs prior to release of AdoMet from the enzyme. The sequence is that of S-adenosylmethionine synthase from Synechococcus sp. (strain JA-2-3B'a(2-13)) (Cyanobacteria bacterium Yellowstone B-Prime).